A 208-amino-acid polypeptide reads, in one-letter code: Probable very-long-chain (3R)-3-hydroxyacyl-CoA dehydratase (208 aa).

The Cytoplasmic portion of the chain corresponds to 1-11; that stretch reads MSKILKIQYLK. The helical transmembrane segment at 12–35 threads the bilayer; that stretch reads LYNVISCFLWMSVLLRTGLIWGIT. Over 36 to 46 the chain is Lumenal; the sequence is KDTAVVFHETN. The chain crosses the membrane as a helical span at residues 47–67; sequence TLVRWVQTLAIAEVFHSIFGL. Topologically, residues 68–78 are cytoplasmic; it reads VSSSPLTTIIQ. A helical transmembrane segment spans residues 79–97; sequence VASRLYLVWGVCYPFSYVI. The Lumenal portion of the chain corresponds to 98–102; the sequence is EGSPI. The helical transmembrane segment at 103 to 123 threads the bilayer; the sequence is YLSMIIAWSITEIIRYAFYAF. Over 124 to 134 the chain is Cytoplasmic; sequence NLNGDIPAFLT. Residues 135-157 form a helical membrane-spanning segment; it reads WLRYNTFLILYPIGAGSEFLLVL. Active-site residues include tyrosine 145 and glutamate 152. Residues 158-171 lie on the Lumenal side of the membrane; sequence KSRIAAQYVWSLNK. A helical membrane pass occupies residues 172-192; that stretch reads LLWPILMSIYPPGLYIMYTHM. Residues 193-208 are Cytoplasmic-facing; sequence LAQRRKISKRAAARRT.

This sequence belongs to the very long-chain fatty acids dehydratase HACD family.

It localises to the endoplasmic reticulum membrane. It carries out the reaction a very-long-chain (3R)-3-hydroxyacyl-CoA = a very-long-chain (2E)-enoyl-CoA + H2O. Its pathway is lipid metabolism; fatty acid biosynthesis. Its function is as follows. Catalyzes the third of the four reactions of the long-chain fatty acids elongation cycle. This endoplasmic reticulum-bound enzymatic process, allows the addition of two carbons to the chain of long- and very long-chain fatty acids/VLCFAs per cycle. This enzyme catalyzes the dehydration of the 3-hydroxyacyl-CoA intermediate into trans-2,3-enoyl-CoA, within each cycle of fatty acid elongation. Thereby, it participates in the production of VLCFAs of different chain lengths that are involved in multiple biological processes as precursors of membrane lipids and lipid mediators. The protein is Probable very-long-chain (3R)-3-hydroxyacyl-CoA dehydratase of Schizosaccharomyces pombe (strain 972 / ATCC 24843) (Fission yeast).